The sequence spans 882 residues: Envelope glycoprotein gp160 (882 aa).

A signal peptide spans 1–22; it reads MGCLGNQLLIAILLLSVYGIYC. Residues 23-697 lie on the Extracellular side of the membrane; sequence IQYVTVFYGV…TSWIKYIQYG (675 aa). The N-linked (GlcNAc...) asparagine; by host glycan is linked to N37. C44 and C57 are joined by a disulfide. 19 N-linked (GlcNAc...) asparagine; by host glycosylation sites follow: N70, N114, N149, N159, N174, N187, N201, N205, N215, N247, N250, N257, N281, N287, N298, N309, N319, N374, and N380. 5 disulfides stabilise this stretch: C101–C223, C108–C214, C113–C171, C236–C266, and C246–C258. Residues 113–170 are V1; sequence CNKSETDKWGLTKSSTTTASTTTTTTAKSVETRDIVNETSPCVVHDNCTGLEQEPMIS. A V2 region spans residues 171-214; sequence CKFNMTGLKRDKKKEYNETWYSADLVCEQGNSTGNESRCYMNHC. The tract at residues 314-346 is V3; it reads CRRPGNKTVLPVTIMSALVFHSQPVNERPKQAW. C314 and C347 are disulfide-bonded. 2 disulfides stabilise this stretch: C398/C462 and C405/C435. The V4 stretch occupies residues 405–435; it reads CKMNWFLNWVEDRSLTTQKPKERHKRNYVPC. N-linked (GlcNAc...) asparagine; by host glycosylation is found at N463, N474, and N479. Positions 478 to 485 are V5; that stretch reads GNQTSITM. The fusion peptide stretch occupies residues 529 to 549; it reads GVFVLGFLGFLATAGSAMGAA. The tract at residues 592–608 is immunosuppression; sequence LQTRVSAIEKYLKDQAQ. N-linked (GlcNAc...) asparagine; by host glycosylation is found at N628, N637, and N653. A coiled-coil region spans residues 637–669; that stretch reads NETWQEWERKVDFLEANITALLEEAQIQQEKNM. Positions 674–695 are MPER; binding to GalCer; it reads KLNSWDVFGNWFDLTSWIKYIQ. A helical membrane pass occupies residues 698–718; the sequence is IYIIVGVILLRIVIYIVQMLA. The Cytoplasmic portion of the chain corresponds to 719 to 882; it reads RLRQGYRPVF…IRQGLELTLL (164 aa). Positions 724 to 727 match the YXXV motif; contains endocytosis signal motif; that stretch reads YRPV. Positions 738 to 761 are disordered; it reads THTQQDPALPTKEGKKGDGGGSGG. A lipid anchor (S-palmitoyl cysteine; by host) is attached at C790. The Di-leucine internalization motif motif lies at 881–882; it reads LL.

The mature envelope protein (Env) consists of a homotrimer of non-covalently associated gp120-gp41 heterodimers. The resulting complex protrudes from the virus surface as a spike. Interacts with host CD4 and CCR5. Gp120 also interacts with the C-type lectins CD209/DC-SIGN and CLEC4M/DC-SIGNR (collectively referred to as DC-SIGN(R)). In terms of assembly, the mature envelope protein (Env) consists of a homotrimer of non-covalently associated gp120-gp41 heterodimers. The resulting complex protrudes from the virus surface as a spike. In terms of processing, specific enzymatic cleavages in vivo yield mature proteins. Envelope glycoproteins are synthesized as an inactive precursor that is heavily N-glycosylated and processed likely by host cell furin in the Golgi to yield the mature SU and TM proteins. The cleavage site between SU and TM requires the minimal sequence [KR]-X-[KR]-R. Post-translationally, palmitoylation of the transmembrane protein and of Env polyprotein (prior to its proteolytic cleavage) is essential for their association with host cell membrane lipid rafts. Palmitoylation is therefore required for envelope trafficking to classical lipid rafts, but not for viral replication.

The protein resides in the virion membrane. Its subcellular location is the host cell membrane. It localises to the host endosome membrane. The surface protein gp120 (SU) attaches the virus to the host lymphoid cell by binding to the primary receptor CD4. This interaction induces a structural rearrangement creating a high affinity binding site for a chemokine coreceptor like CCR5. This peculiar 2 stage receptor-interaction strategy allows gp120 to maintain the highly conserved coreceptor-binding site in a cryptic conformation, protected from neutralizing antibodies. These changes are transmitted to the transmembrane protein gp41 and are thought to activate its fusogenic potential by unmasking its fusion peptide. Functionally, surface protein gp120 (SU) may target the virus to gut-associated lymphoid tissue (GALT) by binding host ITGA4/ITGB7 (alpha-4/beta-7 integrins), a complex that mediates T-cell migration to the GALT. Interaction between gp120 and ITGA4/ITGB7 would allow the virus to enter GALT early in the infection, infecting and killing most of GALT's resting CD4+ T-cells. This T-cell depletion is believed to be the major insult to the host immune system leading to AIDS. In terms of biological role, the surface protein gp120 is a ligand for CD209/DC-SIGN and CLEC4M/DC-SIGNR, which are respectively found on dendritic cells (DCs), and on endothelial cells of liver sinusoids and lymph node sinuses. These interactions allow capture of viral particles at mucosal surfaces by these cells and subsequent transmission to permissive cells. DCs are professional antigen presenting cells, critical for host immunity by inducing specific immune responses against a broad variety of pathogens. They act as sentinels in various tissues where they take up antigen, process it, and present it to T-cells following migration to lymphoid organs. SIV subverts the migration properties of dendritic cells to gain access to CD4+ T-cells in lymph nodes. Virus transmission to permissive T-cells occurs either in trans (without DCs infection, through viral capture and transmission), or in cis (following DCs productive infection, through the usual CD4-gp120 interaction), thereby inducing a robust infection. In trans infection, bound virions remain infectious over days and it is proposed that they are not degraded, but protected in non-lysosomal acidic organelles within the DCs close to the cell membrane thus contributing to the viral infectious potential during DCs' migration from the periphery to the lymphoid tissues. On arrival at lymphoid tissues, intact virions recycle back to DCs' cell surface allowing virus transmission to CD4+ T-cells. Virion capture also seems to lead to MHC-II-restricted viral antigen presentation, and probably to the activation of SIV-specific CD4+ cells. Its function is as follows. The transmembrane protein gp41 (TM) acts as a class I viral fusion protein. Under the current model, the protein has at least 3 conformational states: pre-fusion native state, pre-hairpin intermediate state, and post-fusion hairpin state. During fusion of viral and target intracellular membranes, the coiled coil regions (heptad repeats) assume a trimer-of-hairpins structure, positioning the fusion peptide in close proximity to the C-terminal region of the ectodomain. The formation of this structure appears to drive apposition and subsequent fusion of viral and target cell membranes. Complete fusion occurs in host cell endosomes. The virus undergoes clathrin-dependent internalization long before endosomal fusion, thus minimizing the surface exposure of conserved viral epitopes during fusion and reducing the efficacy of inhibitors targeting these epitopes. Membranes fusion leads to delivery of the nucleocapsid into the cytoplasm. The envelope glycoprotein gp160 precursor down-modulates cell surface CD4 antigen by interacting with it in the endoplasmic reticulum and blocking its transport to the cell surface. Functionally, the gp120-gp41 heterodimer allows rapid transcytosis of the virus through CD4 negative cells such as simple epithelial monolayers of the intestinal, rectal and endocervical epithelial barriers. Both gp120 and gp41 specifically recognize glycosphingolipids galactosyl-ceramide (GalCer) or 3' sulfo-galactosyl-ceramide (GalS) present in the lipid rafts structures of epithelial cells. Binding to these alternative receptors allows the rapid transcytosis of the virus through the epithelial cells. This transcytotic vesicle-mediated transport of virions from the apical side to the basolateral side of the epithelial cells does not involve infection of the cells themselves. This Simian immunodeficiency virus (isolate Mm142-83) (SIV-mac) protein is Envelope glycoprotein gp160 (env).